Consider the following 902-residue polypeptide: Calcium-activated chloride channel regulator 3A-1 (902 aa).

An N-terminal signal peptide occupies residues 1-21 (MVPGLQVLLFLTLHLLQNTES). The tract at residues 45 to 199 (DERLIPSIKE…RITGTNVVHN (155 aa)) is metalloprotease domain. A glycan (N-linked (GlcNAc...) asparagine) is linked at N75. H155 serves as a coordination point for Zn(2+). Residue E156 is part of the active site. Residues H159 and D166 each coordinate Zn(2+). Residues 308–476 (VVCLVLDKSG…NSLIDAFSRI (169 aa)) form the VWFA domain. 7 N-linked (GlcNAc...) asparagine glycosylation sites follow: N504, N515, N630, N687, N697, N809, and N814.

The protein belongs to the CLCR family. In terms of assembly, part of a complex composed of complement component C3, CLCA1/CLCA3, A2ML1/OH and ALB/serum albumin. Post-translationally, glycosylated. In terms of processing, the 130-kDa product is autoproteolytically processed by the metalloprotease domain and yields two subunits, a 90-kDa protein and a group of 32- to 38-kDa proteins. The cleavage is necessary for calcium-activated chloride channel (CaCC) activation activity. Highly expressed in skin and spleen, and at lower levels in kidney and liver. Also detected in lung and brain. Not detected in lung or brain. In lung, localizes to respiratory epithelia of the bronchi and trachea and the submucosal glands.

The protein localises to the cell membrane. Its function is as follows. Plays a role in modulating chloride current across the plasma membrane in a calcium-dependent manner. The sequence is that of Calcium-activated chloride channel regulator 3A-1 from Mus musculus (Mouse).